We begin with the raw amino-acid sequence, 395 residues long: ATP phosphoribosyltransferase regulatory subunit (395 aa).

This sequence belongs to the class-II aminoacyl-tRNA synthetase family. HisZ subfamily. In terms of assembly, heteromultimer composed of HisG and HisZ subunits.

It localises to the cytoplasm. It participates in amino-acid biosynthesis; L-histidine biosynthesis; L-histidine from 5-phospho-alpha-D-ribose 1-diphosphate: step 1/9. In terms of biological role, required for the first step of histidine biosynthesis. May allow the feedback regulation of ATP phosphoribosyltransferase activity by histidine. The polypeptide is ATP phosphoribosyltransferase regulatory subunit (Pseudomonas syringae pv. syringae (strain B728a)).